The primary structure comprises 621 residues: C4-dicarboxylate transport sensor protein DctB (621 aa).

The Cytoplasmic segment spans residues 1–26; it reads MHHVRMVKLPAEASDPHALRSRARRS. A helical transmembrane segment spans residues 27-45; that stretch reads WLVFAAVALVLLAAGLLLA. At 46 to 320 the chain is on the periplasmic side; the sequence is RDYGRSQALA…PLAAGAREAQ (275 aa). The helical transmembrane segment at 321–338 threads the bilayer; sequence LLTLAALVPLLALAALLL. The Cytoplasmic portion of the chain corresponds to 339-621; the sequence is RRRQVVAMRS…TTFAVNLKKA (283 aa). The 210-residue stretch at 412–621 folds into the Histidine kinase domain; the sequence is GVAHEINQPV…TTFAVNLKKA (210 aa). Phosphohistidine; by autocatalysis is present on H415.

In terms of processing, autophosphorylated.

The protein localises to the cell inner membrane. The enzyme catalyses ATP + protein L-histidine = ADP + protein N-phospho-L-histidine.. Member of the two-component regulatory system DctB/DctD involved in the transport of C4-dicarboxylates. DctB functions as a membrane-associated protein kinase that phosphorylates DctD in response to environmental signals. The polypeptide is C4-dicarboxylate transport sensor protein DctB (dctB) (Rhizobium meliloti (strain 1021) (Ensifer meliloti)).